Here is a 732-residue protein sequence, read N- to C-terminus: Copper-transporting ATPase (732 aa).

Residues 1–88 (MTKAQFYIEG…NPSFLTPNVK (88 aa)) are Cytoplasmic-facing. The 67-residue stretch at 2–68 (TKAQFYIEGM…QIEKLGYQPR (67 aa)) folds into the HMA domain. The Cu(+) site is built by C13 and C16. A helical membrane pass occupies residues 89–109 (LALVLLGTLGVLALSMFAPLL). The Extracellular segment spans residues 110-122 (PLPSFLKNPFING). The helical transmembrane segment at 123–142 (IVQLVLSLMVMHMGRNFYVH) threads the bilayer. At 143–149 (GFKALWA) the chain is on the cytoplasmic side. Residues 150–170 (RQPNMDSLIALGTSAALLYSL) form a helical membrane-spanning segment. Residues 171–187 (VLLFRAYTHAPIEGYYF) are Extracellular-facing. The helical transmembrane segment at 188–208 (ESVCVILLFVMAGKRVEENSK) threads the bilayer. Residues 209–336 (DKALEAMQSL…KAPIARLADK (128 aa)) are Cytoplasmic-facing. The chain crosses the membrane as a helical span at residues 337 to 359 (VAGVFVPIVIGIASIAFLVWLVL). The Extracellular portion of the chain corresponds to 360–365 (GDFTRA). The helical transmembrane segment at 366–383 (LEVFIAILVISCPCALGL) threads the bilayer. Topologically, residues 384–663 (ATPMALLVAQ…KLSALTIANI (280 aa)) are cytoplasmic. D421 (4-aspartylphosphate intermediate) is an active-site residue. 2 residues coordinate Mg(2+): D609 and D613. The helical transmembrane segment at 664–683 (KQNLFWAFCYNSIAIPLACG) threads the bilayer. Topologically, residues 684 to 694 (VAYKLGIMFNP) are extracellular. The chain crosses the membrane as a helical span at residues 695–713 (MLASLAMSLSSVSVVLNAQ). Over 714–732 (RLRGAHFKIRGSHENRHSS) the chain is Cytoplasmic.

It belongs to the cation transport ATPase (P-type) (TC 3.A.3) family. Type IB subfamily.

The protein localises to the cell membrane. It carries out the reaction Cu(+)(in) + ATP + H2O = Cu(+)(out) + ADP + phosphate + H(+). Functionally, probably involved in copper export. This Helicobacter felis (strain ATCC 49179 / CCUG 28539 / NCTC 12436 / CS1) protein is Copper-transporting ATPase (copA).